The primary structure comprises 212 residues: Large ribosomal subunit protein uL3 (212 aa).

Gln-153 carries the N5-methylglutamine modification.

It belongs to the universal ribosomal protein uL3 family. In terms of assembly, part of the 50S ribosomal subunit. Forms a cluster with proteins L14 and L19. Methylated by PrmB.

Its function is as follows. One of the primary rRNA binding proteins, it binds directly near the 3'-end of the 23S rRNA, where it nucleates assembly of the 50S subunit. The sequence is that of Large ribosomal subunit protein uL3 from Shewanella sediminis (strain HAW-EB3).